We begin with the raw amino-acid sequence, 144 residues long: MIALIQRVSQAKVDVNGETIGKIGKGLLVLLGVEKEDNREKADKLAEKVLNYRIFSDENDKMNLNVQQAQGELLIVSQFTLAADTQKGLRPSFSKGAPPALANELYEYFIQKCAGKLPVSTGQFAADMQVSLTNDGPVTFWLNV.

The Gly-cisPro motif, important for rejection of L-amino acids motif lies at 136 to 137 (GP).

This sequence belongs to the DTD family. In terms of assembly, homodimer.

The protein localises to the cytoplasm. The enzyme catalyses glycyl-tRNA(Ala) + H2O = tRNA(Ala) + glycine + H(+). The catalysed reaction is a D-aminoacyl-tRNA + H2O = a tRNA + a D-alpha-amino acid + H(+). In terms of biological role, an aminoacyl-tRNA editing enzyme that deacylates mischarged D-aminoacyl-tRNAs. Also deacylates mischarged glycyl-tRNA(Ala), protecting cells against glycine mischarging by AlaRS. Acts via tRNA-based rather than protein-based catalysis; rejects L-amino acids rather than detecting D-amino acids in the active site. By recycling D-aminoacyl-tRNA to D-amino acids and free tRNA molecules, this enzyme counteracts the toxicity associated with the formation of D-aminoacyl-tRNA entities in vivo and helps enforce protein L-homochirality. This chain is D-aminoacyl-tRNA deacylase, found in Haemophilus influenzae (strain PittEE).